Consider the following 567-residue polypeptide: Zinc finger protein 143 (567 aa).

C2H2-type zinc fingers lie at residues 230–254, 260–284, 290–314, 320–344, 350–374, 380–404, and 410–433; these read FRCD…ERSH, YQCD…VRTH, YRCS…VRTH, FKCP…IRTH, YYCS…VRIH, YVCT…HVVH, and YNCN…RTAH. The segment covering 506–520 has biased composition (polar residues); the sequence is SATESGPQHSHNLGG. Residues 506–525 are disordered; it reads SATESGPQHSHNLGGSESRP.

It belongs to the GLI C2H2-type zinc-finger protein family.

The protein localises to the nucleus. Functionally, transcriptional activator. Activates the gene for selenocysteine tRNA (tRNAsec). Binds to the activator element (AE) motif of the selenocysteine tRNA gene promoter. The protein is Zinc finger protein 143 (znf143) of Xenopus tropicalis (Western clawed frog).